The following is a 134-amino-acid chain: Methylglyoxal synthase (134 aa).

The MGS-like domain occupies 1 to 134 (MVNLNIALIA…GLLEWRNAVK (134 aa)). Substrate contacts are provided by residues H11, K15, and 37-40 (TGAT). Catalysis depends on D63, which acts as the Proton donor/acceptor. Residue H90 coordinates substrate.

Belongs to the methylglyoxal synthase family.

The catalysed reaction is dihydroxyacetone phosphate = methylglyoxal + phosphate. Functionally, catalyzes the formation of methylglyoxal from dihydroxyacetone phosphate. The chain is Methylglyoxal synthase from Thermoanaerobacterium thermosaccharolyticum (Clostridium thermosaccharolyticum).